The primary structure comprises 170 residues: MKQNERRILLGRIVGAFGVKGELKLESWTEPRTAIFRYQPWIVRSPSGQESVVSGVRGRDQGKNLIAVFPGVTDRDTVEAMHGTEIYVARSALPPPKPDEYYWVDLEELQVETVEGVKLGTVSHLFSTGSNDVVVVRGDRERMIPFVFPDFVKSVDFEANLIVVDWDPDF.

Positions 98-170 (PDEYYWVDLE…LIVVDWDPDF (73 aa)) constitute a PRC barrel domain.

This sequence belongs to the RimM family. As to quaternary structure, binds ribosomal protein uS19.

The protein localises to the cytoplasm. An accessory protein needed during the final step in the assembly of 30S ribosomal subunit, possibly for assembly of the head region. Essential for efficient processing of 16S rRNA. May be needed both before and after RbfA during the maturation of 16S rRNA. It has affinity for free ribosomal 30S subunits but not for 70S ribosomes. This chain is Ribosome maturation factor RimM, found in Xanthomonas axonopodis pv. citri (strain 306).